Consider the following 346-residue polypeptide: GTPase Obg (346 aa).

One can recognise an Obg domain in the interval 1–158; it reads MFVDECVVKL…GTYRLVLKSI (158 aa). The OBG-type G domain occupies 159–332; it reads ADVGLVGFPN…LKKELLKRVT (174 aa). Residues 165–172, 190–194, 216–219, 286–289, and 313–315 contribute to the GTP site; these read GFPNAGKS, FTTLH, DVPG, NKMD, and SCL. Positions 172 and 192 each coordinate Mg(2+).

The protein belongs to the TRAFAC class OBG-HflX-like GTPase superfamily. OBG GTPase family. As to quaternary structure, monomer. It depends on Mg(2+) as a cofactor.

It is found in the cytoplasm. Functionally, an essential GTPase which binds GTP, GDP and possibly (p)ppGpp with moderate affinity, with high nucleotide exchange rates and a fairly low GTP hydrolysis rate. Plays a role in control of the cell cycle, stress response, ribosome biogenesis and in those bacteria that undergo differentiation, in morphogenesis control. This is GTPase Obg from Opitutus terrae (strain DSM 11246 / JCM 15787 / PB90-1).